Reading from the N-terminus, the 588-residue chain is Transcription factor tau 60 kDa subunit (588 aa).

A sufficient for SPT15-binding region spans residues 399–588 (LPKLPENFSM…VYCGTTLEVM (190 aa)).

Heterodimer with TFC6. Component of the TFIIIC complex composed of TFC1, TFC3, TFC4, TFC6, TFC7 and TFC8. The subunits are organized in two globular domains, tauA and tauB, connected by a proteolysis-sensitive and flexible linker. Interacts with SPT15 and directly with TFC6.

The protein resides in the nucleus. In terms of biological role, TFIIIC mediates tRNA and 5S RNA gene activation by binding to intragenic promoter elements. Upstream of the transcription start site, TFIIIC assembles the initiation complex TFIIIB-TFIIIC-tDNA, which is sufficient for RNA polymerase III recruitment and function. Part of the tauB domain of TFIIIC that binds boxB DNA promoter sites of tRNA and similar genes. Plays a role in TFIIB assembly through its interaction with SPT15/TBP. Essential for cell viability. The sequence is that of Transcription factor tau 60 kDa subunit (TFC8) from Saccharomyces cerevisiae (strain ATCC 204508 / S288c) (Baker's yeast).